The sequence spans 101 residues: Eukaryotic translation initiation factor 4E-binding protein 3 (101 aa).

The tract at residues 1-28 (MSSSTSCPIPGCRDQLPDGYSTTPGGTL) is disordered. A YXXXXLphi motif motif is present at residues 40 to 46 (YDRKFLL). The TOS motif signature appears at 97–101 (FEMDM).

Belongs to the eIF4E-binding protein family. As to quaternary structure, interacts with EIF4E. Interacts with RPA2 (via N-terminus); the interaction enhances EIF4EBP3-mediated inhibition of EIF4E-mediated mRNA nuclear export. Phosphorylated.

It is found in the cytoplasm. The protein localises to the nucleus. Repressor of translation initiation that regulates EIF4E activity by preventing its assembly into the eIF4F complex: the hypophosphorylated form competes with EIF4G1/EIF4G3 and strongly binds to EIF4E, leading to repression of translation. In contrast, the hyperphosphorylated form dissociates from EIF4E, allowing interaction between EIF4G1/EIF4G3 and EIF4E, leading to initiation of translation. Inhibits EIF4E-mediated mRNA nuclear export. The protein is Eukaryotic translation initiation factor 4E-binding protein 3 (Eif4ebp3) of Mus musculus (Mouse).